Here is a 237-residue protein sequence, read N- to C-terminus: Class B acid phosphatase (237 aa).

Positions Met1–Ala25 are cleaved as a signal peptide. Asp69 acts as the Nucleophile in catalysis. Mg(2+)-binding residues include Asp69 and Asp71. Asp71 serves as the catalytic Proton donor. Residues Thr137–Gly138 and Lys177 each bind substrate. Asp192 lines the Mg(2+) pocket.

This sequence belongs to the class B bacterial acid phosphatase family. Homotetramer. Mg(2+) serves as cofactor.

It is found in the periplasm. It carries out the reaction a phosphate monoester + H2O = an alcohol + phosphate. Its function is as follows. Dephosphorylates several organic phosphate monoesters. Also has a phosphotransferase activity catalyzing the transfer of low-energy phosphate groups from organic phosphate monoesters to free hydroxyl groups of various organic compounds. In Klebsiella pneumoniae (strain 342), this protein is Class B acid phosphatase.